The sequence spans 244 residues: ATP synthase subunit b 2 (244 aa).

A helical transmembrane segment spans residues 2 to 22 (TVDWWTIGLQVINVSVLIWLL).

This sequence belongs to the ATPase B chain family. F-type ATPases have 2 components, F(1) - the catalytic core - and F(0) - the membrane proton channel. F(1) has five subunits: alpha(3), beta(3), gamma(1), delta(1), epsilon(1). F(0) has three main subunits: a(1), b(2) and c(10-14). The alpha and beta chains form an alternating ring which encloses part of the gamma chain. F(1) is attached to F(0) by a central stalk formed by the gamma and epsilon chains, while a peripheral stalk is formed by the delta and b chains.

The protein resides in the cell inner membrane. In terms of biological role, f(1)F(0) ATP synthase produces ATP from ADP in the presence of a proton or sodium gradient. F-type ATPases consist of two structural domains, F(1) containing the extramembraneous catalytic core and F(0) containing the membrane proton channel, linked together by a central stalk and a peripheral stalk. During catalysis, ATP synthesis in the catalytic domain of F(1) is coupled via a rotary mechanism of the central stalk subunits to proton translocation. Functionally, component of the F(0) channel, it forms part of the peripheral stalk, linking F(1) to F(0). The polypeptide is ATP synthase subunit b 2 (Gluconobacter oxydans (strain 621H) (Gluconobacter suboxydans)).